The chain runs to 777 residues: Hepatocyte growth factor-regulated tyrosine kinase substrate (777 aa).

The VHS domain maps to 15-143 (ATSQLLLETD…IMKVEGHVFP (129 aa)). The FYVE-type zinc finger occupies 160–220 (WVDAEECHRC…VCEPCYEQLN (61 aa)). Zn(2+)-binding residues include Cys166, Cys169, Cys182, Cys185, Cys190, and Cys193. Lys207 carries the post-translational modification N6-acetyllysine. Residues Cys212 and Cys215 each contribute to the Zn(2+) site. Tyr216 carries the post-translational modification Phosphotyrosine. A disordered region spans residues 223 to 319 (AEGKATSTTE…SPVNSSAPLA (97 aa)). Residues 225–543 (GKATSTTELP…QRLQEQEKER (319 aa)) form an interaction with SNX1 region. Residues 258–277 (QEEEELQLALALSQSEAEEK) enclose the UIM domain. The span at 290–311 (PKAEPMPSASSAPPASSLYSSP) shows a compositional bias: low complexity. A phosphotyrosine mark is found at Tyr308, Tyr329, and Tyr334. Residues 338-407 (KQEEARKSPT…NGESEESHEQ (70 aa)) form a disordered region. An interaction with SNAP25 and TRAK2 region spans residues 445-543 (SINGMHPQLL…QRLQEQEKER (99 aa)). Residues 454-572 (LELLNQLDER…FPLPYAQLQA (119 aa)) form an interaction with STAM region. Residues 480-777 (ARGALSALRE…GSEAQLISFD (298 aa)) form an interaction with NF2 region. Lys551 is modified (N6-succinyllysine). The segment at 718-777 (LPSQDASLPPQQPYIAGQQPMYQQMAPSGGPPQQQPPVAQQPQAQGPPAQGSEAQLISFD) is disordered. Positions 753-768 (PPVAQQPQAQGPPAQG) are enriched in low complexity.

As to quaternary structure, component of the ESCRT-0 complex composed of STAM or STAM2 and HGS. Part of a complex at least composed of HSG, STAM2 (or probably STAM) and EPS15. Interacts with STAM. Interacts with STAM2. Interacts with EPS15; the interaction is direct, calcium-dependent and inhibited by SNAP25. Identified in a complex with STAM and LITAF. Found in a complex with STAM and E3 ligase ITCH and DTX3L. Interacts with E3 ligase DTX3L; the interaction brings together STAM and HSG, promotes their recruitment to early endosomes and decreases STAM and HGS ubiquitination by ITCH. Interacts with NF2; the interaction is direct. Interacts with ubiquitin; the interaction is direct. Interacts with VPS37C. Interacts with SMAD1, SMAD2 and SMAD3. Interacts with TSG101; the interaction mediates the association with the ESCRT-I complex. Interacts with SNAP25; the interaction is direct and decreases with addition of increasing concentrations of free calcium. Interacts with SNX1; the interaction is direct. Component of a 550 kDa membrane complex at least composed of HGS and SNX1 but excluding EGFR. Interacts with TRAK1. Interacts with TRAK2. Component of the CART complex, at least composed of ACTN4, HGS/HRS, MYO5B and TRIM3. Interacts (via UIM domain) with UBQLN1 (via ubiquitin-like domain). Interacts with ARRDC3. Identified in a complex containing at least ARRDC4, AVPR2 and HGS. Interacts with LAPTM4B; promotes HGS ubiquitination. Phosphorylated on Tyr-334. A minor site of phosphorylation on Tyr-329 is detected. Phosphorylation occurs in response to EGF, IL-2, GM-CSF and HGF. In terms of processing, ubiquitinated. Ubiquitinated by ITCH. As to expression, ubiquitous expression in adult and fetal tissues with higher expression in testis and peripheral blood leukocytes.

Its subcellular location is the cytoplasm. It is found in the early endosome membrane. It localises to the endosome. The protein localises to the multivesicular body membrane. Its function is as follows. Involved in intracellular signal transduction mediated by cytokines and growth factors. When associated with STAM, it suppresses DNA signaling upon stimulation by IL-2 and GM-CSF. Could be a direct effector of PI3-kinase in vesicular pathway via early endosomes and may regulate trafficking to early and late endosomes by recruiting clathrin. May concentrate ubiquitinated receptors within clathrin-coated regions. Involved in down-regulation of receptor tyrosine kinase via multivesicular body (MVBs) when complexed with STAM (ESCRT-0 complex). The ESCRT-0 complex binds ubiquitin and acts as a sorting machinery that recognizes ubiquitinated receptors and transfers them to further sequential lysosomal sorting/trafficking processes. May contribute to the efficient recruitment of SMADs to the activin receptor complex. Involved in receptor recycling via its association with the CART complex, a multiprotein complex required for efficient transferrin receptor recycling but not for EGFR degradation. In Homo sapiens (Human), this protein is Hepatocyte growth factor-regulated tyrosine kinase substrate (HGS).